The sequence spans 265 residues: Deoxyguanosine kinase, mitochondrial (265 aa).

32-40 (GNIAVGKST) serves as a coordination point for ATP. Positions 57, 88, 99, and 106 each coordinate substrate. Glu-129 acts as the Proton acceptor in catalysis. Residues Arg-130 and Asp-135 each contribute to the substrate site. Position 190–194 (190–194 (RLQRR)) interacts with ATP. Glu-199 contributes to the substrate binding site. An ATP-binding site is contributed by 242–244 (EDF).

The protein belongs to the DCK/DGK family. As to quaternary structure, homodimer.

Its subcellular location is the mitochondrion. It catalyses the reaction 2'-deoxyguanosine + ATP = dGMP + ADP + H(+). Phosphorylates deoxyguanosine in the mitochondrial matrix with high efficiency but shows very low activity against other deoxynucleosides. This is Deoxyguanosine kinase, mitochondrial from Xenopus laevis (African clawed frog).